The primary structure comprises 376 residues: Palmitoyltransferase PFA4 (376 aa).

Residues 1 to 11 (MPVKLKWPWLG) are Cytoplasmic-facing. Residues 12–32 (IAIPSFLIASIGYCAHYFILL) traverse the membrane as a helical segment. Topologically, residues 33–40 (NFLSLRKQ) are lumenal. Residues 41-61 (LWYQFCQTMIWLSYYLAIYTP) traverse the membrane as a helical segment. Residues 62-122 (PGKPPTNFKP…NCVGYNNFPH (61 aa)) lie on the Cytoplasmic side of the membrane. Positions 78–128 (VYCKKCKCYKPERSHHCKTCNQCVLMMDHHCPWTMNCVGYNNFPHFIRFLF) constitute a DHHC domain. The S-palmitoyl cysteine intermediate role is filled by Cys108. A helical transmembrane segment spans residues 123–143 (FIRFLFWVIVGTTSLAIFLTT). Residues 144–163 (RIHSIWVHRSSPSYLYYKSE) are Lumenal-facing. Residues 164–184 (LIFLTILTPLNAFILLTISIL) form a helical membrane-spanning segment. Residues 185 to 376 (MIRCLFNQIF…EDFGVDVDVE (192 aa)) lie on the Cytoplasmic side of the membrane.

It belongs to the DHHC palmitoyltransferase family. PFA4 subfamily.

The protein resides in the endoplasmic reticulum membrane. The enzyme catalyses L-cysteinyl-[protein] + hexadecanoyl-CoA = S-hexadecanoyl-L-cysteinyl-[protein] + CoA. Functionally, mediates the reversible addition of palmitate to target proteins, thereby regulating their membrane association and biological function. This Candida glabrata (strain ATCC 2001 / BCRC 20586 / JCM 3761 / NBRC 0622 / NRRL Y-65 / CBS 138) (Yeast) protein is Palmitoyltransferase PFA4.